Reading from the N-terminus, the 189-residue chain is Peptidyl-tRNA hydrolase (189 aa).

TRNA is bound at residue Tyr-14. The active-site Proton acceptor is the His-19. Residues Phe-64, Asn-66, and Asn-112 each coordinate tRNA.

The protein belongs to the PTH family. In terms of assembly, monomer.

The protein localises to the cytoplasm. It carries out the reaction an N-acyl-L-alpha-aminoacyl-tRNA + H2O = an N-acyl-L-amino acid + a tRNA + H(+). Functionally, hydrolyzes ribosome-free peptidyl-tRNAs (with 1 or more amino acids incorporated), which drop off the ribosome during protein synthesis, or as a result of ribosome stalling. Its function is as follows. Catalyzes the release of premature peptidyl moieties from peptidyl-tRNA molecules trapped in stalled 50S ribosomal subunits, and thus maintains levels of free tRNAs and 50S ribosomes. The protein is Peptidyl-tRNA hydrolase of Sphingopyxis alaskensis (strain DSM 13593 / LMG 18877 / RB2256) (Sphingomonas alaskensis).